Consider the following 140-residue polypeptide: Nucleoside diphosphate kinase (140 aa).

ATP is bound by residues Lys11, Phe59, Arg87, Thr93, Arg104, and Asn114. The Pros-phosphohistidine intermediate role is filled by His117.

Belongs to the NDK family. Homotetramer. It depends on Mg(2+) as a cofactor.

The protein resides in the cytoplasm. The enzyme catalyses a 2'-deoxyribonucleoside 5'-diphosphate + ATP = a 2'-deoxyribonucleoside 5'-triphosphate + ADP. It carries out the reaction a ribonucleoside 5'-diphosphate + ATP = a ribonucleoside 5'-triphosphate + ADP. Its function is as follows. Major role in the synthesis of nucleoside triphosphates other than ATP. The ATP gamma phosphate is transferred to the NDP beta phosphate via a ping-pong mechanism, using a phosphorylated active-site intermediate. This Rhizobium johnstonii (strain DSM 114642 / LMG 32736 / 3841) (Rhizobium leguminosarum bv. viciae) protein is Nucleoside diphosphate kinase.